We begin with the raw amino-acid sequence, 409 residues long: Dual-specificity RNA methyltransferase RlmN (409 aa).

The Proton acceptor role is filled by Glu-121. The 250-residue stretch at 127–376 (EEGRGTLCIS…IRTPRGRDIL (250 aa)) folds into the Radical SAM core domain. A disulfide bridge links Cys-134 with Cys-379. [4Fe-4S] cluster contacts are provided by Cys-141, Cys-145, and Cys-148. S-adenosyl-L-methionine-binding positions include 205-206 (GE), Ser-237, 259-261 (SLH), and Asn-336. Residue Cys-379 is the S-methylcysteine intermediate of the active site.

The protein belongs to the radical SAM superfamily. RlmN family. [4Fe-4S] cluster serves as cofactor.

It is found in the cytoplasm. The catalysed reaction is adenosine(2503) in 23S rRNA + 2 reduced [2Fe-2S]-[ferredoxin] + 2 S-adenosyl-L-methionine = 2-methyladenosine(2503) in 23S rRNA + 5'-deoxyadenosine + L-methionine + 2 oxidized [2Fe-2S]-[ferredoxin] + S-adenosyl-L-homocysteine. It carries out the reaction adenosine(37) in tRNA + 2 reduced [2Fe-2S]-[ferredoxin] + 2 S-adenosyl-L-methionine = 2-methyladenosine(37) in tRNA + 5'-deoxyadenosine + L-methionine + 2 oxidized [2Fe-2S]-[ferredoxin] + S-adenosyl-L-homocysteine. In terms of biological role, specifically methylates position 2 of adenine 2503 in 23S rRNA and position 2 of adenine 37 in tRNAs. m2A2503 modification seems to play a crucial role in the proofreading step occurring at the peptidyl transferase center and thus would serve to optimize ribosomal fidelity. This chain is Dual-specificity RNA methyltransferase RlmN, found in Agrobacterium fabrum (strain C58 / ATCC 33970) (Agrobacterium tumefaciens (strain C58)).